A 653-amino-acid polypeptide reads, in one-letter code: Acetyl-coenzyme A synthetase (653 aa).

CoA-binding positions include 195–198 (RGGK) and threonine 314. Residues 390–392 (GEP), 414–419 (DTWWQT), aspartate 505, and arginine 520 each bind ATP. Serine 528 lines the CoA pocket. Arginine 531 contacts ATP. 2 residues coordinate Mg(2+): valine 542 and valine 547. Residue lysine 617 is modified to N6-acetyllysine.

The protein belongs to the ATP-dependent AMP-binding enzyme family. It depends on Mg(2+) as a cofactor. Post-translationally, acetylated. Deacetylation by the SIR2-homolog deacetylase activates the enzyme.

The catalysed reaction is acetate + ATP + CoA = acetyl-CoA + AMP + diphosphate. Functionally, catalyzes the conversion of acetate into acetyl-CoA (AcCoA), an essential intermediate at the junction of anabolic and catabolic pathways. AcsA undergoes a two-step reaction. In the first half reaction, AcsA combines acetate with ATP to form acetyl-adenylate (AcAMP) intermediate. In the second half reaction, it can then transfer the acetyl group from AcAMP to the sulfhydryl group of CoA, forming the product AcCoA. The protein is Acetyl-coenzyme A synthetase of Pasteurella multocida (strain Pm70).